A 429-amino-acid chain; its full sequence is Enolase (429 aa).

Residue glutamine 165 coordinates (2R)-2-phosphoglycerate. Glutamate 207 serves as the catalytic Proton donor. Residues aspartate 244, glutamate 287, and aspartate 314 each contribute to the Mg(2+) site. Lysine 339, arginine 368, serine 369, and lysine 390 together coordinate (2R)-2-phosphoglycerate. Catalysis depends on lysine 339, which acts as the Proton acceptor.

Belongs to the enolase family. It depends on Mg(2+) as a cofactor.

It is found in the cytoplasm. Its subcellular location is the secreted. The protein resides in the cell surface. The enzyme catalyses (2R)-2-phosphoglycerate = phosphoenolpyruvate + H2O. It participates in carbohydrate degradation; glycolysis; pyruvate from D-glyceraldehyde 3-phosphate: step 4/5. Catalyzes the reversible conversion of 2-phosphoglycerate (2-PG) into phosphoenolpyruvate (PEP). It is essential for the degradation of carbohydrates via glycolysis. The chain is Enolase from Roseiflexus castenholzii (strain DSM 13941 / HLO8).